A 298-amino-acid polypeptide reads, in one-letter code: Protease HtpX homolog (298 aa).

The next 2 helical transmembrane spans lie at 5–25 (IFLF…VLSV) and 45–65 (MALL…SLAI). H155 contributes to the Zn(2+) binding site. The active site involves E156. H159 serves as a coordination point for Zn(2+). 2 consecutive transmembrane segments (helical) span residues 170-190 (LLQG…AWIA) and 204-224 (FIAM…VVFA). A Zn(2+)-binding site is contributed by E230.

Belongs to the peptidase M48B family. It depends on Zn(2+) as a cofactor.

Its subcellular location is the cell membrane. The chain is Protease HtpX homolog from Bacillus subtilis (strain 168).